The sequence spans 145 residues: Arginine repressor (145 aa).

Belongs to the ArgR family.

The protein resides in the cytoplasm. It functions in the pathway amino-acid biosynthesis; L-arginine biosynthesis [regulation]. Its function is as follows. Regulates arginine biosynthesis genes. This Streptococcus equi subsp. zooepidemicus (strain H70) protein is Arginine repressor.